A 1071-amino-acid chain; its full sequence is ATP-dependent helicase/deoxyribonuclease subunit B (1071 aa).

It belongs to the helicase family. AddB/RexB type 2 subfamily. In terms of assembly, heterodimer of AddA and RexB. Mg(2+) serves as cofactor.

Functionally, the heterodimer acts as both an ATP-dependent DNA helicase and an ATP-dependent, dual-direction single-stranded exonuclease. Recognizes the chi site generating a DNA molecule suitable for the initiation of homologous recombination. This subunit has 5' -&gt; 3' nuclease activity but not helicase activity. The chain is ATP-dependent helicase/deoxyribonuclease subunit B from Streptococcus pyogenes serotype M6 (strain ATCC BAA-946 / MGAS10394).